A 389-amino-acid chain; its full sequence is Alanine racemase (389 aa).

Catalysis depends on K48, which acts as the Proton acceptor; specific for D-alanine. K48 bears the N6-(pyridoxal phosphate)lysine mark. Residue R144 participates in substrate binding. Y281 serves as the catalytic Proton acceptor; specific for L-alanine. A substrate-binding site is contributed by M329.

Belongs to the alanine racemase family. Pyridoxal 5'-phosphate serves as cofactor.

It catalyses the reaction L-alanine = D-alanine. It participates in amino-acid biosynthesis; D-alanine biosynthesis; D-alanine from L-alanine: step 1/1. In terms of biological role, catalyzes the interconversion of L-alanine and D-alanine. May also act on other amino acids. The sequence is that of Alanine racemase (alr) from Leptospira interrogans serogroup Icterohaemorrhagiae serovar copenhageni (strain Fiocruz L1-130).